We begin with the raw amino-acid sequence, 208 residues long: Small ribosomal subunit protein uS4 (208 aa).

Positions 97–158 constitute an S4 RNA-binding domain; it reads TRLDNVIYRM…RAQKYLCVQE (62 aa).

The protein belongs to the universal ribosomal protein uS4 family. In terms of assembly, part of the 30S ribosomal subunit. Contacts protein S5. The interaction surface between S4 and S5 is involved in control of translational fidelity.

Its function is as follows. One of the primary rRNA binding proteins, it binds directly to 16S rRNA where it nucleates assembly of the body of the 30S subunit. In terms of biological role, with S5 and S12 plays an important role in translational accuracy. This Xylella fastidiosa (strain M23) protein is Small ribosomal subunit protein uS4.